Consider the following 139-residue polypeptide: Protein archease (139 aa).

Positions 12, 138, and 139 each coordinate Ca(2+).

It belongs to the archease family.

Its function is as follows. Activates the tRNA-splicing ligase complex by facilitating the enzymatic turnover of catalytic subunit RtcB. Acts by promoting the guanylylation of RtcB, a key intermediate step in tRNA ligation. Can also alter the NTP specificity of RtcB such that ATP, dGTP or ITP is used efficiently. The chain is Protein archease from Sulfolobus acidocaldarius (strain ATCC 33909 / DSM 639 / JCM 8929 / NBRC 15157 / NCIMB 11770).